We begin with the raw amino-acid sequence, 168 residues long: Putative peroxiredoxin prxA (168 aa).

Residues 4–158 enclose the Thioredoxin domain; sequence LKAGDSFPAD…LEPAKNHLEF (155 aa). The active-site Cysteine sulfenic acid (-SOH) intermediate is the Cys-61.

Belongs to the peroxiredoxin family. Prx5 subfamily. As to quaternary structure, homodimer; disulfide-linked, upon oxidation. Interacts with thioredoxin trxA.

It catalyses the reaction a hydroperoxide + [thioredoxin]-dithiol = an alcohol + [thioredoxin]-disulfide + H2O. Thiol-specific peroxidase that catalyzes the reduction of hydrogen peroxide and organic hydroperoxides to water and alcohols, respectively. Plays a role in cell protection against oxidative stress by detoxifying peroxides and as sensor of hydrogen peroxide-mediated signaling events. Involved in osmoadaptation. In Emericella nidulans (strain FGSC A4 / ATCC 38163 / CBS 112.46 / NRRL 194 / M139) (Aspergillus nidulans), this protein is Putative peroxiredoxin prxA.